The sequence spans 403 residues: Phosphopentomutase (403 aa).

Residues Asp-13, Asp-298, His-303, Asp-339, His-340, and His-351 each coordinate Mn(2+).

It belongs to the phosphopentomutase family. It depends on Mn(2+) as a cofactor.

It is found in the cytoplasm. It catalyses the reaction 2-deoxy-alpha-D-ribose 1-phosphate = 2-deoxy-D-ribose 5-phosphate. The catalysed reaction is alpha-D-ribose 1-phosphate = D-ribose 5-phosphate. Its pathway is carbohydrate degradation; 2-deoxy-D-ribose 1-phosphate degradation; D-glyceraldehyde 3-phosphate and acetaldehyde from 2-deoxy-alpha-D-ribose 1-phosphate: step 1/2. Isomerase that catalyzes the conversion of deoxy-ribose 1-phosphate (dRib-1-P) and ribose 1-phosphate (Rib-1-P) to deoxy-ribose 5-phosphate (dRib-5-P) and ribose 5-phosphate (Rib-5-P), respectively. In Streptococcus thermophilus, this protein is Phosphopentomutase.